Here is a 245-residue protein sequence, read N- to C-terminus: MKFDILTLFPAMFDGPLTESIIRRAVERGFVDISLHNIRDYATDRHRVVDDAPYGGGDGMVMKVEPLAACIEAVKAERPAARVILTTPRGRRFDHDAARELAGYEELIIVCGRYEGIDERVRDLFVDDEFSIGDFVLTGGELAAMVMIDAVIRFIPGVLGSPGSAEYDSFADGLLEYPQYTRPVEFRGVQVPGVLLSGNHAEISRWRRQKALELTRRVRPDLLHKAELSSSDRDCLAMLEREGEP.

S-adenosyl-L-methionine is bound by residues glycine 112 and 132–137 (IGDFVL).

It belongs to the RNA methyltransferase TrmD family. In terms of assembly, homodimer.

Its subcellular location is the cytoplasm. The enzyme catalyses guanosine(37) in tRNA + S-adenosyl-L-methionine = N(1)-methylguanosine(37) in tRNA + S-adenosyl-L-homocysteine + H(+). Functionally, specifically methylates guanosine-37 in various tRNAs. In Geobacter sulfurreducens (strain ATCC 51573 / DSM 12127 / PCA), this protein is tRNA (guanine-N(1)-)-methyltransferase.